Consider the following 715-residue polypeptide: Fatty acid oxidation complex subunit alpha (715 aa).

The interval Asn8–Pro197 is enoyl-CoA hydratase. Residues Ala313 to Ser715 form a 3-hydroxyacyl-CoA dehydrogenase region.

It in the N-terminal section; belongs to the enoyl-CoA hydratase/isomerase family. This sequence in the central section; belongs to the 3-hydroxyacyl-CoA dehydrogenase family. As to quaternary structure, heterotetramer of two alpha chains (FadJ) and two beta chains (FadI).

The protein resides in the cytoplasm. It carries out the reaction a (3S)-3-hydroxyacyl-CoA = a (2E)-enoyl-CoA + H2O. It catalyses the reaction a 4-saturated-(3S)-3-hydroxyacyl-CoA = a (3E)-enoyl-CoA + H2O. The catalysed reaction is a (3S)-3-hydroxyacyl-CoA + NAD(+) = a 3-oxoacyl-CoA + NADH + H(+). The enzyme catalyses (3S)-3-hydroxybutanoyl-CoA = (3R)-3-hydroxybutanoyl-CoA. Its pathway is lipid metabolism; fatty acid beta-oxidation. Catalyzes the formation of a hydroxyacyl-CoA by addition of water on enoyl-CoA. Also exhibits 3-hydroxyacyl-CoA epimerase and 3-hydroxyacyl-CoA dehydrogenase activities. The chain is Fatty acid oxidation complex subunit alpha from Photobacterium profundum (strain SS9).